The sequence spans 486 residues: Malonate-semialdehyde dehydrogenase (486 aa).

NAD(+) is bound by residues phenylalanine 154, lysine 178, glutamate 181, arginine 182, and serine 231. The active-site Nucleophile is the cysteine 286. Residue glutamate 386 coordinates NAD(+).

It belongs to the aldehyde dehydrogenase family. IolA subfamily. As to quaternary structure, homotetramer.

The enzyme catalyses 3-oxopropanoate + NAD(+) + CoA + H2O = hydrogencarbonate + acetyl-CoA + NADH + H(+). It carries out the reaction 2-methyl-3-oxopropanoate + NAD(+) + CoA + H2O = propanoyl-CoA + hydrogencarbonate + NADH + H(+). It participates in polyol metabolism; myo-inositol degradation into acetyl-CoA; acetyl-CoA from myo-inositol: step 7/7. Functionally, catalyzes the oxidation of malonate semialdehyde (MSA) and methylmalonate semialdehyde (MMSA) into acetyl-CoA and propanoyl-CoA, respectively. Is involved in a myo-inositol catabolic pathway. Bicarbonate, and not CO2, is the end-product of the enzymatic reaction. This is Malonate-semialdehyde dehydrogenase from Bacillus pumilus (strain SAFR-032).